A 207-amino-acid chain; its full sequence is Large ribosomal subunit protein uL4 (207 aa).

A disordered region spans residues 44–77; sequence LRQGTHKTKGRSEVRGGGRKPWRQKGTGRARQGS. The span at 60–71 shows a compositional bias: basic residues; the sequence is GGRKPWRQKGTG.

It belongs to the universal ribosomal protein uL4 family. As to quaternary structure, part of the 50S ribosomal subunit.

Its function is as follows. One of the primary rRNA binding proteins, this protein initially binds near the 5'-end of the 23S rRNA. It is important during the early stages of 50S assembly. It makes multiple contacts with different domains of the 23S rRNA in the assembled 50S subunit and ribosome. In terms of biological role, forms part of the polypeptide exit tunnel. This is Large ribosomal subunit protein uL4 from Shouchella clausii (strain KSM-K16) (Alkalihalobacillus clausii).